The following is a 277-amino-acid chain: Large ribosomal subunit protein uL2 (277 aa).

2 disordered regions span residues proline 36 to glycine 55 and tryptophan 213 to lysine 277.

The protein belongs to the universal ribosomal protein uL2 family. In terms of assembly, part of the 50S ribosomal subunit. Forms a bridge to the 30S subunit in the 70S ribosome.

Functionally, one of the primary rRNA binding proteins. Required for association of the 30S and 50S subunits to form the 70S ribosome, for tRNA binding and peptide bond formation. It has been suggested to have peptidyltransferase activity; this is somewhat controversial. Makes several contacts with the 16S rRNA in the 70S ribosome. In Staphylococcus aureus (strain bovine RF122 / ET3-1), this protein is Large ribosomal subunit protein uL2.